The primary structure comprises 176 residues: Ribosome maturation factor RimM (176 aa).

Residues 93–172 (KDEFFQFDII…EILVKGARDI (80 aa)) form the PRC barrel domain.

Belongs to the RimM family. As to quaternary structure, binds ribosomal protein uS19.

Its subcellular location is the cytoplasm. Functionally, an accessory protein needed during the final step in the assembly of 30S ribosomal subunit, possibly for assembly of the head region. Essential for efficient processing of 16S rRNA. May be needed both before and after RbfA during the maturation of 16S rRNA. It has affinity for free ribosomal 30S subunits but not for 70S ribosomes. This chain is Ribosome maturation factor RimM, found in Campylobacter concisus (strain 13826).